The sequence spans 394 residues: Flap endonuclease 1-A (394 aa).

The interval 1-105 is N-domain; that stretch reads MGIKGLTKLI…RELAKRFARR (105 aa). Asp-34 is a binding site for Mg(2+). Arg-71 is a binding site for DNA. The Mg(2+) site is built by Asp-87, Glu-159, Glu-161, Asp-180, and Asp-182. Residues 123–254 are I-domain; sequence DVEKYSKKTV…QTALKMIRQH (132 aa). Glu-159 is a DNA binding site. DNA-binding residues include Gly-232 and Asp-234. Asp-234 provides a ligand contact to Mg(2+). The tract at residues 338-346 is interaction with PCNA; the sequence is SQGRLESFF. The tract at residues 343-394 is disordered; the sequence is ESFFGVSSSSSNKRKEAPDSEASAGKQVKTAAAVKPAKAASKKGPAKGGKKK. A compositionally biased stretch (low complexity) spans 368–381; sequence KQVKTAAAVKPAKA. Positions 382-394 are enriched in basic residues; the sequence is ASKKGPAKGGKKK.

This sequence belongs to the XPG/RAD2 endonuclease family. FEN1 subfamily. As to quaternary structure, interacts with PCNA. Three molecules of FEN1 bind to one PCNA trimer with each molecule binding to one PCNA monomer. PCNA stimulates the nuclease activity without altering cleavage specificity. It depends on Mg(2+) as a cofactor. In terms of processing, phosphorylated. Phosphorylation upon DNA damage induces relocalization to the nuclear plasma.

Its subcellular location is the nucleus. It is found in the nucleolus. The protein localises to the nucleoplasm. The protein resides in the mitochondrion. In terms of biological role, structure-specific nuclease with 5'-flap endonuclease and 5'-3' exonuclease activities involved in DNA replication and repair. During DNA replication, cleaves the 5'-overhanging flap structure that is generated by displacement synthesis when DNA polymerase encounters the 5'-end of a downstream Okazaki fragment. It enters the flap from the 5'-end and then tracks to cleave the flap base, leaving a nick for ligation. Also involved in the long patch base excision repair (LP-BER) pathway, by cleaving within the apurinic/apyrimidinic (AP) site-terminated flap. Acts as a genome stabilization factor that prevents flaps from equilibrating into structures that lead to duplications and deletions. Also possesses 5'-3' exonuclease activity on nicked or gapped double-stranded DNA, and exhibits RNase H activity. Also involved in replication and repair of rDNA and in repairing mitochondrial DNA. In Physcomitrium patens (Spreading-leaved earth moss), this protein is Flap endonuclease 1-A.